We begin with the raw amino-acid sequence, 543 residues long: Capsid vertex component 2 (543 aa).

Residues 1–54 form an interaction with major capsid protein/MCP region; that stretch reads MWKLEKKYILRQNPSVFLNGTAFWTPHPQNILHIDRNSLRETKKNASLYRTRLL. Positions 101–120 are disordered; the sequence is SPQLLPSPPKPLSPTTQSQP.

The protein belongs to the herpesviridae CVC2 protein family. In terms of assembly, heterodimerizes with CVC1. Interacts with major capsid protein/MCP and triplex capsid protein 1/TRX1 at the pentamer vertices. Interacts with the large tegument protein/LTP.

The protein resides in the virion. It localises to the host nucleus. Capsid vertex-specific component that plays a role during viral DNA encapsidation, assuring correct genome cleavage and presumably stabilizing capsids that contain full-length viral genomes. Participates in the interaction between the capsid and the tegument through interaction with the large tegument protein/LTP. This Saimiri sciureus (Common squirrel monkey) protein is Capsid vertex component 2.